The primary structure comprises 685 residues: MRKILVTNALPYANGPIHMGHLLGYIQADIWVRAMRAMGHDVTYVCADDAHGTAIMLRAEANGISPEKQIANVQQEHIRDFDGFGVHFDHYDSTHSAENKVRSEDIYLKNREAGNIAVRPITQLFDPEKQMFLSDRFIKGTCPKCKAEDQYGDACEVCGTTYNATELLNPRSTLSGATPVEKSSDHYFFKLPNFGEYLQKWTRDEGRLPVSIANKLDEWFEAGLADWDISRDAPYFGFEIPDAPNKYFYVWVDAPIGYMSSFENYIKAKRPELNFDDYWKKDSQNEVYHFIGKDIVYFHALFWPAMLEGANYRTPSGLFVNGFLTVNGQKMSKSRGTFIKAETYLQHLNPEYLRYYFASKLSDKVEDSDLNLDDFVQKVNSDLVGKVVNIASRCAKFINSSFNNTLSANCAEPELVQSFIDAGDSIAQAYEAREFSAAIREIMALADKANQYIDEKKPWALAKQEGQEQQVHNVCSVGINLFRQLAIYLSPVLPTLAAQVQAFLQLESFDFASRQQILLAHEIAQFQPLMQRVDPKAVAAMVDASKDSLAATAEAPKAEKKKEKKVEKKPEPKVGEAEIIGIEDFIKVDLRVALVQEAATVEGSDKLLQLTLDVGEAEPRNVFSGIREFYQPEDLKGKLVVMVANLAPRKMRFGISNGMVLAAGNGDGVWVISPDSGAKPGDKVS.

4 residues coordinate Zn(2+): Cys-142, Cys-145, Cys-155, and Cys-158. Positions 330–334 match the 'KMSKS' region motif; the sequence is KMSKS. Residue Lys-333 coordinates ATP. Residues 584 to 685 form the tRNA-binding domain; sequence DFIKVDLRVA…SGAKPGDKVS (102 aa).

The protein belongs to the class-I aminoacyl-tRNA synthetase family. MetG type 1 subfamily. In terms of assembly, homodimer. Requires Zn(2+) as cofactor.

The protein resides in the cytoplasm. It catalyses the reaction tRNA(Met) + L-methionine + ATP = L-methionyl-tRNA(Met) + AMP + diphosphate. Its function is as follows. Is required not only for elongation of protein synthesis but also for the initiation of all mRNA translation through initiator tRNA(fMet) aminoacylation. The sequence is that of Methionine--tRNA ligase from Acinetobacter baylyi (strain ATCC 33305 / BD413 / ADP1).